A 367-amino-acid polypeptide reads, in one-letter code: 2-aminoethylphosphonate--pyruvate transaminase (367 aa).

Position 194 is an N6-(pyridoxal phosphate)lysine (lysine 194).

The protein belongs to the class-V pyridoxal-phosphate-dependent aminotransferase family. PhnW subfamily. In terms of assembly, homodimer. It depends on pyridoxal 5'-phosphate as a cofactor.

It catalyses the reaction (2-aminoethyl)phosphonate + pyruvate = phosphonoacetaldehyde + L-alanine. Its function is as follows. Involved in phosphonate degradation. The polypeptide is 2-aminoethylphosphonate--pyruvate transaminase (Salmonella choleraesuis (strain SC-B67)).